We begin with the raw amino-acid sequence, 252 residues long: Agamous-like MADS-box protein AGL6 (252 aa).

In terms of domain architecture, MADS-box spans 3 to 57 (RGRVEMKRIENKINRQVTFSKRRNGLLKKAYELSVLCDAEVALIIFSSRGKLYEF). The 91-residue stretch at 86–176 (TQSWCQEVTK…KIKFETEGHA (91 aa)) folds into the K-box domain. Residues 91–173 (QEVTKLKSKY…KQLKIKFETE (83 aa)) are a coiled coil.

As to quaternary structure, forms a heterodimer with AGAMOUS. Interacts with AGL15 and AGL16. Preferentially expressed in flowers.

The protein localises to the nucleus. In terms of biological role, probable transcription factor. Forms a heterodimer via the K-box domain with AG, that could be involved in genes regulation during floral meristem development. This is Agamous-like MADS-box protein AGL6 (AGL6) from Arabidopsis thaliana (Mouse-ear cress).